The primary structure comprises 406 residues: Anthranilate 1,2-dioxygenase system ferredoxin--NAD(+) reductase component (406 aa).

Position 5–37 (5–37) interacts with FAD; that stretch reads PFVIVGAGHAARRTAEALRARDADAPIVMIGAE. 152 to 161 is an NAD(+) binding site; the sequence is GGGFIGLEVA.

It belongs to the FAD-dependent oxidoreductase family. Part of a multicomponent enzyme system composed of a reductase (AndAa), a ferredoxin (AndAb) and a two-subunit oxygenase component (AndAc and AndAd). Requires FAD as cofactor.

It catalyses the reaction 2 reduced [2Fe-2S]-[ferredoxin] + NAD(+) + H(+) = 2 oxidized [2Fe-2S]-[ferredoxin] + NADH. The protein operates within aromatic compound metabolism; anthranilate degradation via hydroxylation; catechol from anthranilate: step 1/1. In terms of biological role, part of the multicomponent anthranilate dioxygenase, that converts anthranilate to catechol. Probably transfers electrons from ferredoxin (AndAb) to NADH. The sequence is that of Anthranilate 1,2-dioxygenase system ferredoxin--NAD(+) reductase component from Burkholderia cepacia (Pseudomonas cepacia).